We begin with the raw amino-acid sequence, 139 residues long: Large-conductance mechanosensitive channel (139 aa).

A run of 2 helical transmembrane segments spans residues 16 to 36 and 83 to 103; these read VIDL…VDSL and GQFI…FVAV.

It belongs to the MscL family. As to quaternary structure, homopentamer.

Its subcellular location is the cell inner membrane. Channel that opens in response to stretch forces in the membrane lipid bilayer. May participate in the regulation of osmotic pressure changes within the cell. This Aromatoleum aromaticum (strain DSM 19018 / LMG 30748 / EbN1) (Azoarcus sp. (strain EbN1)) protein is Large-conductance mechanosensitive channel.